We begin with the raw amino-acid sequence, 256 residues long: Cilia- and flagella-associated protein 410 (256 aa).

LRR repeat units lie at residues 19–40 (SVRK…QEMP), 41–62 (SLEV…SRCQ), and 63–84 (RLSE…FYLK). The LRRCT domain maps to 97–137 (NPCCGTSPHRYRMTVLRTLPRLQKLDNQAVTEEELSRALSE). 2 disordered regions span residues 129–156 (EELS…GGPK) and 168–212 (AETG…SSHR). Phosphoserine is present on residues Ser-136 and Ser-177.

As to quaternary structure, found in a complex with CFAP410, NEK1 and SPATA7. Interacts with NEK1. In terms of tissue distribution, widely expressed. Expressed in the retina.

It localises to the mitochondrion. It is found in the cytoplasm. The protein resides in the cytoskeleton. Its subcellular location is the cilium basal body. The protein localises to the cell projection. It localises to the cilium. It is found in the photoreceptor outer segment. Plays a role in cilia formation and/or maintenance. Plays a role in the regulation of cell morphology and cytoskeletal organization. Involved in DNA damage repair. The protein is Cilia- and flagella-associated protein 410 of Homo sapiens (Human).